A 261-amino-acid polypeptide reads, in one-letter code: Succinate dehydrogenase iron-sulfur subunit (261 aa).

A disordered region spans residues 1–23 (MAELRLPPNSVVKKGKEHKEQEE). The 2Fe-2S ferredoxin-type domain occupies 28 to 119 (RKVKIYRYDP…DIKIYPLPHM (92 aa)). The [2Fe-2S] cluster site is built by C80, C85, and C100. One can recognise a 4Fe-4S ferredoxin-type domain in the interval 161–191 (GREKLDGLYECILCACCSTSCPSYWWNGDKY). [4Fe-4S] cluster contacts are provided by C171, C174, and C177. C181 is a [3Fe-4S] cluster binding site. W186 contacts a ubiquinone. [3Fe-4S] cluster-binding residues include C228 and C234. Residue C238 participates in [4Fe-4S] cluster binding.

This sequence belongs to the succinate dehydrogenase/fumarate reductase iron-sulfur protein family. As to quaternary structure, part of an enzyme complex containing four subunits: a flavoprotein, an iron-sulfur, cytochrome b-556, and a hydrophobic anchor protein. It depends on [2Fe-2S] cluster as a cofactor. [3Fe-4S] cluster is required as a cofactor. The cofactor is [4Fe-4S] cluster.

The enzyme catalyses a quinone + succinate = fumarate + a quinol. Its pathway is carbohydrate metabolism; tricarboxylic acid cycle; fumarate from succinate (bacterial route): step 1/1. This Rickettsia felis (strain ATCC VR-1525 / URRWXCal2) (Rickettsia azadi) protein is Succinate dehydrogenase iron-sulfur subunit (sdhB).